The chain runs to 134 residues: Acyl carrier protein, chloroplastic (134 aa).

The N-terminal 51 residues, M1–C51, are a transit peptide targeting the chloroplast. A Carrier domain is found at Q55–M130. At S90 the chain carries O-(pantetheine 4'-phosphoryl)serine.

This sequence belongs to the acyl carrier protein (ACP) family. In terms of processing, 4'-phosphopantetheine is transferred from CoA to a specific serine of apo-ACP by acpS. This modification is essential for activity because fatty acids are bound in thioester linkage to the sulfhydryl of the prosthetic group. In terms of tissue distribution, seed.

It is found in the plastid. Its subcellular location is the chloroplast. The protein operates within lipid metabolism; fatty acid biosynthesis. Its function is as follows. Carrier of the growing fatty acid chain in fatty acid biosynthesis. This chain is Acyl carrier protein, chloroplastic (ACL1.C1), found in Brassica napus (Rape).